A 69-amino-acid polypeptide reads, in one-letter code: NAD(P)H-quinone oxidoreductase subunit O (69 aa).

Belongs to the complex I NdhO subunit family. In terms of assembly, NDH-1 can be composed of about 15 different subunits; different subcomplexes with different compositions have been identified which probably have different functions.

Its subcellular location is the cellular thylakoid membrane. It carries out the reaction a plastoquinone + NADH + (n+1) H(+)(in) = a plastoquinol + NAD(+) + n H(+)(out). It catalyses the reaction a plastoquinone + NADPH + (n+1) H(+)(in) = a plastoquinol + NADP(+) + n H(+)(out). Functionally, NDH-1 shuttles electrons from an unknown electron donor, via FMN and iron-sulfur (Fe-S) centers, to quinones in the respiratory and/or the photosynthetic chain. The immediate electron acceptor for the enzyme in this species is believed to be plastoquinone. Couples the redox reaction to proton translocation, and thus conserves the redox energy in a proton gradient. Cyanobacterial NDH-1 also plays a role in inorganic carbon-concentration. This Acaryochloris marina (strain MBIC 11017) protein is NAD(P)H-quinone oxidoreductase subunit O.